Reading from the N-terminus, the 224-residue chain is Ribose-5-phosphate isomerase A (224 aa).

Substrate is bound by residues 26–29, 82–85, and 95–98; these read TGST, DGAD, and KGGG. Glu-104 (proton acceptor) is an active-site residue. Lys-122 provides a ligand contact to substrate.

It belongs to the ribose 5-phosphate isomerase family. Homodimer.

The enzyme catalyses aldehydo-D-ribose 5-phosphate = D-ribulose 5-phosphate. It functions in the pathway carbohydrate degradation; pentose phosphate pathway; D-ribose 5-phosphate from D-ribulose 5-phosphate (non-oxidative stage): step 1/1. Its function is as follows. Catalyzes the reversible conversion of ribose-5-phosphate to ribulose 5-phosphate. The polypeptide is Ribose-5-phosphate isomerase A (Lactococcus lactis subsp. cremoris (strain SK11)).